The primary structure comprises 100 residues: Large ribosomal subunit protein bL27 (100 aa).

A propeptide spanning residues 1 to 9 is cleaved from the precursor; the sequence is MLVMNLQLF.

It belongs to the bacterial ribosomal protein bL27 family. Post-translationally, the N-terminus is cleaved by ribosomal processing cysteine protease Prp.

The protein is Large ribosomal subunit protein bL27 of Clostridium botulinum (strain 657 / Type Ba4).